Here is a 400-residue protein sequence, read N- to C-terminus: Tryptophan synthase beta chain (400 aa).

Residue K91 is modified to N6-(pyridoxal phosphate)lysine.

It belongs to the TrpB family. As to quaternary structure, tetramer of two alpha and two beta chains. It depends on pyridoxal 5'-phosphate as a cofactor.

It catalyses the reaction (1S,2R)-1-C-(indol-3-yl)glycerol 3-phosphate + L-serine = D-glyceraldehyde 3-phosphate + L-tryptophan + H2O. It participates in amino-acid biosynthesis; L-tryptophan biosynthesis; L-tryptophan from chorismate: step 5/5. The beta subunit is responsible for the synthesis of L-tryptophan from indole and L-serine. The protein is Tryptophan synthase beta chain of Listeria monocytogenes serotype 4a (strain HCC23).